A 969-amino-acid polypeptide reads, in one-letter code: Protein translocase subunit SecA (969 aa).

Residues glutamine 99, 117–121 (GEGKT), and aspartate 631 contribute to the ATP site.

This sequence belongs to the SecA family. In terms of assembly, monomer and homodimer. Part of the essential Sec protein translocation apparatus which comprises SecA, SecYEG and auxiliary proteins SecDF. Other proteins may also be involved.

It is found in the cell inner membrane. The protein localises to the cytoplasm. The enzyme catalyses ATP + H2O + cellular proteinSide 1 = ADP + phosphate + cellular proteinSide 2.. Part of the Sec protein translocase complex. Interacts with the SecYEG preprotein conducting channel. Has a central role in coupling the hydrolysis of ATP to the transfer of proteins into and across the cell membrane, serving as an ATP-driven molecular motor driving the stepwise translocation of polypeptide chains across the membrane. The protein is Protein translocase subunit SecA of Chlamydia trachomatis serovar L2 (strain ATCC VR-902B / DSM 19102 / 434/Bu).